The sequence spans 119 residues: Putative transmembrane protein ORF119 (119 aa).

A run of 3 helical transmembrane segments spans residues 9–29 (TLAI…PAMV), 73–93 (QYAG…SIFT), and 95–115 (PIAL…AFYY).

The protein resides in the host membrane. The chain is Putative transmembrane protein ORF119 from Acidianus convivator (ATV).